The following is a 630-amino-acid chain: tRNA uridine 5-carboxymethylaminomethyl modification enzyme MnmG (630 aa).

13–18 (GGGHAG) serves as a coordination point for FAD. 273 to 287 (GPRYCPSIEDKIHRF) is a binding site for NAD(+).

It belongs to the MnmG family. As to quaternary structure, homodimer. Heterotetramer of two MnmE and two MnmG subunits. It depends on FAD as a cofactor.

Its subcellular location is the cytoplasm. In terms of biological role, NAD-binding protein involved in the addition of a carboxymethylaminomethyl (cmnm) group at the wobble position (U34) of certain tRNAs, forming tRNA-cmnm(5)s(2)U34. This Pseudomonas putida (Arthrobacter siderocapsulatus) protein is tRNA uridine 5-carboxymethylaminomethyl modification enzyme MnmG.